An 882-amino-acid polypeptide reads, in one-letter code: Lon protease homolog, mitochondrial (882 aa).

Residues 1-34 (MIHVLKSRSTLLTASSIVRTSVGSSSRYSQTRTY) constitute a mitochondrion transit peptide. Positions 68-281 (TLGLPLVSRP…KALVLLNRER (214 aa)) constitute a Lon N-terminal domain. ATP is bound at residue 435–442 (GPPGTGKT). The 192-residue stretch at 687–878 (PLPHGIVMGL…DKVYEVAFSS (192 aa)) folds into the Lon proteolytic domain. Active-site residues include S784 and K827.

This sequence belongs to the peptidase S16 family. Homohexamer or homoheptamer. Organized in a ring with a central cavity.

Its subcellular location is the mitochondrion matrix. It carries out the reaction Hydrolysis of proteins in presence of ATP.. Its function is as follows. ATP-dependent serine protease that mediates the selective degradation of misfolded, unassembled or oxidatively damaged polypeptides as well as certain short-lived regulatory proteins in the mitochondrial matrix. May also have a chaperone function in the assembly of inner membrane protein complexes. Participates in the regulation of mitochondrial gene expression and in the maintenance of the integrity of the mitochondrial genome. Binds to mitochondrial DNA in a site-specific manner. The protein is Lon protease homolog, mitochondrial of Phaeodactylum tricornutum (strain CCAP 1055/1).